We begin with the raw amino-acid sequence, 124 residues long: Glycine cleavage system H protein (124 aa).

The region spanning 22 to 103 is the Lipoyl-binding domain; the sequence is VFVVGITDNA…AYTAWIFKIK (82 aa). K63 carries the post-translational modification N6-lipoyllysine.

It belongs to the GcvH family. The glycine cleavage system is composed of four proteins: P, T, L and H. The cofactor is (R)-lipoate.

The glycine cleavage system catalyzes the degradation of glycine. The H protein shuttles the methylamine group of glycine from the P protein to the T protein. This is Glycine cleavage system H protein from Bordetella pertussis (strain Tohama I / ATCC BAA-589 / NCTC 13251).